Here is a 426-residue protein sequence, read N- to C-terminus: Proline--tRNA ligase (426 aa).

It belongs to the class-II aminoacyl-tRNA synthetase family. ProS type 2 subfamily. As to quaternary structure, homodimer.

The protein resides in the cytoplasm. The catalysed reaction is tRNA(Pro) + L-proline + ATP = L-prolyl-tRNA(Pro) + AMP + diphosphate. In terms of biological role, catalyzes the attachment of proline to tRNA(Pro) in a two-step reaction: proline is first activated by ATP to form Pro-AMP and then transferred to the acceptor end of tRNA(Pro). The protein is Proline--tRNA ligase of Rickettsia africae (strain ESF-5).